The primary structure comprises 534 residues: Pentatricopeptide repeat-containing protein At1g07590, mitochondrial (534 aa).

The transit peptide at 1–20 (MRSIIALMRQREYFVQAIRR) directs the protein to the mitochondrion. PPR repeat units lie at residues 165-199 (NELLYNNLVIACLDQGVIRLALEYMKKMRELGYRT), 200-234 (SHLVYNRLIIRNSAPGRRKLIAKDLALMKADKATP), 235-269 (HVSTYHILMKLEANEHNIDGVLKAFDGMKKAGVEP), 270-300 (NEVSYCILAMAHAVARLYTVAEAYTEEIEKS), 305-335 (NWSTLDILMILYGRLGKEKELARTWNVIRGF), 339-369 (RSKSYLLATEAFARVGNLDRAEELWLEMKNV), 374-408 (ETEQFNSLLSVYCKDGLIEKAIGVFREMTGNGFKP), 409-443 (NSITYRHLALGCAKAKLMKEALKNIEMGLNLKTSK), and 451-485 (WLETTLSIIECFAEKGDVENSEKLFEEVKNAKYNR).

This sequence belongs to the PPR family. P subfamily.

It is found in the mitochondrion. The sequence is that of Pentatricopeptide repeat-containing protein At1g07590, mitochondrial from Arabidopsis thaliana (Mouse-ear cress).